Reading from the N-terminus, the 178-residue chain is Relaxin-like protein SQ10 (178 aa).

The N-terminal stretch at 1-20 (MPALLFYLLGFCLLQGQVTG) is a signal peptide. Intrachain disulfides connect Cys-34/Cys-165, Cys-46/Cys-178, and Cys-164/Cys-169. Residues 54–150 (ESPSPENPFL…SSASESNTFS (97 aa)) constitute a propeptide, connecting peptide.

The protein belongs to the insulin family. In terms of assembly, heterodimer of a B chain and an A chain linked by two disulfide bonds.

Its subcellular location is the secreted. This is Relaxin-like protein SQ10 from Oryctolagus cuniculus (Rabbit).